The following is a 306-amino-acid chain: Probable cobalamin biosynthesis protein CobD (306 aa).

Transmembrane regions (helical) follow at residues isoleucine 17 to phenylalanine 37, leucine 54 to isoleucine 74, isoleucine 88 to serine 108, isoleucine 155 to phenylalanine 175, isoleucine 207 to tyrosine 227, and serine 286 to methionine 306.

It belongs to the CobD/CbiB family.

It localises to the cell membrane. The protein operates within cofactor biosynthesis; adenosylcobalamin biosynthesis. In terms of biological role, converts cobyric acid to cobinamide by the addition of aminopropanol on the F carboxylic group. This is Probable cobalamin biosynthesis protein CobD from Methanococcus maripaludis (strain C5 / ATCC BAA-1333).